A 446-amino-acid chain; its full sequence is N-succinylarginine dihydrolase (446 aa).

Residues 19-28 (AGLSFGNVAS), N110, and 137-138 (HR) contribute to the substrate site. E174 is an active-site residue. R213 is a binding site for substrate. Residue H249 is part of the active site. Residues D251 and N364 each coordinate substrate. C370 serves as the catalytic Nucleophile.

It belongs to the succinylarginine dihydrolase family. As to quaternary structure, homodimer.

It carries out the reaction N(2)-succinyl-L-arginine + 2 H2O + 2 H(+) = N(2)-succinyl-L-ornithine + 2 NH4(+) + CO2. It functions in the pathway amino-acid degradation; L-arginine degradation via AST pathway; L-glutamate and succinate from L-arginine: step 2/5. Catalyzes the hydrolysis of N(2)-succinylarginine into N(2)-succinylornithine, ammonia and CO(2). This chain is N-succinylarginine dihydrolase, found in Burkholderia ambifaria (strain MC40-6).